The following is a 649-amino-acid chain: Cysteine-rich receptor-like protein kinase 2 (649 aa).

Residues 1-29 (MKKEPVHILPLYLPCLLMFLLSSLRQITG) form the signal peptide. Residues 30 to 258 (DARARAVKVT…IPRNGRSRGS (229 aa)) lie on the Extracellular side of the membrane. 2 consecutive Gnk2-homologous domains span residues 33–134 (ARAV…NYSF) and 139–245 (KGPE…DQDF). Asn47, Asn131, Asn149, Asn154, and Asn214 each carry an N-linked (GlcNAc...) asparagine glycan. Residues 259–279 (VVVIVVSVLSSVVVFMIGVAV) form a helical membrane-spanning segment. The Cytoplasmic portion of the chain corresponds to 280–649 (SVYICKRRTI…TVSQSSFYGR (370 aa)). In terms of domain architecture, Protein kinase spans 325 to 608 (FDNANKLGQG…HMLKNKEEVL (284 aa)). Residues 331 to 339 (LGQGGFGTV) and Lys353 contribute to the ATP site. Tyr398 carries the phosphotyrosine modification. Asp450 functions as the Proton acceptor in the catalytic mechanism. Residues Ser454 and Ser483 each carry the phosphoserine modification. Phosphothreonine is present on residues Thr484 and Thr489. Tyr497 carries the phosphotyrosine modification.

It belongs to the protein kinase superfamily. Ser/Thr protein kinase family. CRK subfamily.

The protein resides in the membrane. The catalysed reaction is L-seryl-[protein] + ATP = O-phospho-L-seryl-[protein] + ADP + H(+). It carries out the reaction L-threonyl-[protein] + ATP = O-phospho-L-threonyl-[protein] + ADP + H(+). The sequence is that of Cysteine-rich receptor-like protein kinase 2 (CRK2) from Arabidopsis thaliana (Mouse-ear cress).